The chain runs to 403 residues: Golgin-45 (403 aa).

Residues Met1–Pro63 form a disordered region. The Tankyrase-binding motif motif lies at Arg22 to Asp26. Ser53 is subject to Phosphoserine. A coiled-coil region spans residues Arg123 to Asp216. The residue at position 356 (Ser356) is a Phosphoserine. Residues Gln397–Leu403 form an essential for interaction with GORASP2 region.

As to quaternary structure, interacts with GORASP2. Interacts with the GTP-bound form of RAB2, but not with other Golgi Rab proteins. Identified in a complex with RAB2 and GORASP2. In terms of processing, ADP-ribosylated by tankyrase TNKS and TNKS2. Poly-ADP-ribosylated protein is recognized by RNF146, followed by ubiquitination. Ubiquitinated by RNF146 when poly-ADP-ribosylated, leading to its degradation.

The protein resides in the golgi apparatus membrane. Its function is as follows. Required for normal Golgi structure and for protein transport from the endoplasmic reticulum (ER) through the Golgi apparatus to the cell surface. The polypeptide is Golgin-45 (Blzf1) (Mus musculus (Mouse)).